Consider the following 666-residue polypeptide: Protein translocase subunit SecA 2 (666 aa).

Residues glutamine 119, glycine 137–serine 141, and aspartate 546 contribute to the ATP site.

It belongs to the SecA family. In terms of assembly, monomer and homodimer. Part of the essential Sec protein translocation apparatus which comprises SecA, SecYEG and auxiliary proteins SecDF-YajC and YidC.

The protein resides in the cell inner membrane. Its subcellular location is the cytoplasm. It carries out the reaction ATP + H2O + cellular proteinSide 1 = ADP + phosphate + cellular proteinSide 2.. Functionally, part of the Sec protein translocase complex. Interacts with the SecYEG preprotein conducting channel. Has a central role in coupling the hydrolysis of ATP to the transfer of proteins into and across the cell membrane, serving both as a receptor for the preprotein-SecB complex and as an ATP-driven molecular motor driving the stepwise translocation of polypeptide chains across the membrane. The chain is Protein translocase subunit SecA 2 from Nitrosospira multiformis (strain ATCC 25196 / NCIMB 11849 / C 71).